We begin with the raw amino-acid sequence, 881 residues long: Actin-like protein ARP8 (881 aa).

The disordered stretch occupies residues Met1–Lys150. 2 stretches are compositionally biased toward acidic residues: residues Glu14–Asn33 and Glu44–Val54. A phosphoserine mark is found at Ser65 and Ser70. The segment covering Ala77–Asn114 has biased composition (acidic residues). Asn502–Ala505 contributes to the ATP binding site.

This sequence belongs to the actin family. Component of the chromatin-remodeling INO80 complex, at least composed of ARP4, ARP5, ARP8, RVB1, RVB2, TAF14, NHP10, IES1, IES3, IES4, IES6, ACT1, IES2, IES5 and INO80. Exists as monomers and dimers, but the dimer is most probably the biologically relevant form required for stable interactions with histones that exploits the twofold symmetry of the nucleosome core.

It localises to the nucleus. The protein resides in the cytoplasm. It is found in the cytoskeleton. Its function is as follows. Probably involved in transcription regulation via its interaction with the INO80 complex, a chromatin remodeling complex. Exhibits low basal ATPase activity, and unable to polymerize. Strongly prefer nucleosomes and H3-H4 tetramers over H2A-H2B dimers, suggesting it may act as a nucleosome recognition module within the complex. The sequence is that of Actin-like protein ARP8 (ARP8) from Saccharomyces cerevisiae (strain ATCC 204508 / S288c) (Baker's yeast).